A 679-amino-acid polypeptide reads, in one-letter code: Protein FAM178B (679 aa).

Residues 70-113 (PLDQGPRCPARRPCSPASAPAPTSPKKPKIQAPGETFPTDWSPP) are disordered. The segment covering 75–90 (PRCPARRPCSPASAPA) has biased composition (low complexity).

Belongs to the FAM178 family.

This Homo sapiens (Human) protein is Protein FAM178B.